The following is a 69-amino-acid chain: Large ribosomal subunit protein bL31 (69 aa).

The Zn(2+) site is built by Cys17, Cys19, Cys37, and Cys40.

This sequence belongs to the bacterial ribosomal protein bL31 family. Type A subfamily. In terms of assembly, part of the 50S ribosomal subunit. It depends on Zn(2+) as a cofactor.

Its function is as follows. Binds the 23S rRNA. The protein is Large ribosomal subunit protein bL31 of Clostridium botulinum (strain Eklund 17B / Type B).